We begin with the raw amino-acid sequence, 120 residues long: MMIIDCGKYYGIDYKSSSLQKLIENSLTSQEICKCIDKINTIRAHKKVMNTIIKYVPKLFPRVVSHPYGLCMQIMKLKWDLSDCNDKQYTNEHCIKVMNYIGATDICHLQEKLNDINKFV.

This is an uncharacterized protein from Acanthamoeba polyphaga mimivirus (APMV).